The chain runs to 664 residues: DNA ligase (664 aa).

NAD(+) is bound by residues 34–38 (DAEYD), 83–84 (SL), and E114. K116 (N6-AMP-lysine intermediate) is an active-site residue. Residues R137, E172, K288, and K312 each coordinate NAD(+). Zn(2+) is bound by residues C406, C409, C424, and C429. The BRCT domain maps to 586-664 (VRDNRLEGLT…EEEFRQMVMS (79 aa)).

Belongs to the NAD-dependent DNA ligase family. LigA subfamily. The cofactor is Mg(2+). Requires Mn(2+) as cofactor.

It catalyses the reaction NAD(+) + (deoxyribonucleotide)n-3'-hydroxyl + 5'-phospho-(deoxyribonucleotide)m = (deoxyribonucleotide)n+m + AMP + beta-nicotinamide D-nucleotide.. DNA ligase that catalyzes the formation of phosphodiester linkages between 5'-phosphoryl and 3'-hydroxyl groups in double-stranded DNA using NAD as a coenzyme and as the energy source for the reaction. It is essential for DNA replication and repair of damaged DNA. The polypeptide is DNA ligase (Carboxydothermus hydrogenoformans (strain ATCC BAA-161 / DSM 6008 / Z-2901)).